The sequence spans 336 residues: Ketoreductase adrE (336 aa).

Position 171 (Y171) interacts with NADP(+).

Belongs to the NAD(P)-dependent epimerase/dehydratase family. Dihydroflavonol-4-reductase subfamily.

It participates in secondary metabolite biosynthesis; terpenoid biosynthesis. In terms of biological role, ketoreductase; part of the gene cluster that mediates the biosynthesis of andrastins, meroterpenoid compounds that exhibit inhibitory activity against ras farnesyltransferase, suggesting that they could be promising leads for antitumor agents. The first step of the pathway is the synthesis of 3,5-dimethylorsellinic acid (DMOA) by the polyketide synthase adrD via condensation of one acetyl-CoA starter unit with 3 malonyl-CoA units and 2 methylations. DMAO is then converted to farnesyl-DMAO by the prenyltransferase adrG. The methyltransferase adrK catalyzes the methylation of the carboxyl group of farnesyl-DMAO to farnesyl-DMAO methyl ester which is further converted to epoxyfarnesyl-DMAO methyl ester by the FAD-dependent monooxygenase adrH. The terpene cyclase adrI then catalyzes the carbon skeletal rearrangement to generate the andrastin E, the first compound in the pathway having the andrastin scaffold, with the tetracyclic ring system. The post-cyclization tailoring enzymes adrF, adrE, adrJ, and adrA, are involved in the conversion of andrastin E into andrastin A. The short chain dehydrogenase adrF is responsible for the oxidation of the C-3 a hydroxyl group of andrastin E to yield the corresponding ketone, andrastin D. The ketoreductase adrE stereoselectively reduces the carbonyl moiety to reverse the stereochemistry of the C-3 position to yield andrastin F. The acetyltransferase adrJ is the acetyltransferase that attaches the acetyl group to the C-3 hydroxyl group of andrastin F to yield andrastin C. Finally, the cytochrome P450 monooxygenase adrA catalyzes two sequential oxidation reactions of the C-23 methyl group, to generate the corresponding alcohol andrastin B, and aldehyde andrastin A. In Penicillium roqueforti, this protein is Ketoreductase adrE.